The primary structure comprises 257 residues: 3-deoxy-manno-octulosonate cytidylyltransferase (257 aa).

This sequence belongs to the KdsB family.

It is found in the cytoplasm. The enzyme catalyses 3-deoxy-alpha-D-manno-oct-2-ulosonate + CTP = CMP-3-deoxy-beta-D-manno-octulosonate + diphosphate. Its pathway is nucleotide-sugar biosynthesis; CMP-3-deoxy-D-manno-octulosonate biosynthesis; CMP-3-deoxy-D-manno-octulosonate from 3-deoxy-D-manno-octulosonate and CTP: step 1/1. It participates in bacterial outer membrane biogenesis; lipopolysaccharide biosynthesis. Functionally, activates KDO (a required 8-carbon sugar) for incorporation into bacterial lipopolysaccharide in Gram-negative bacteria. The chain is 3-deoxy-manno-octulosonate cytidylyltransferase from Stenotrophomonas maltophilia (strain K279a).